The sequence spans 603 residues: NADH-ubiquinone oxidoreductase chain 5 (603 aa).

Transmembrane regions (helical) follow at residues 4 to 24 (LPTL…LSPL), 38 to 58 (MAVS…MHSG), 87 to 107 (LIFM…SLWY), 117 to 137 (FFKY…ANNL), 140 to 160 (LFIG…WWYG), 171 to 191 (AMIY…WFLL), 211 to 233 (LPLT…HPWL), 241 to 261 (TPVS…FLLI), 273 to 293 (ILTL…ICAL), 301 to 320 (IIAF…IGIN), 331 to 351 (THAF…HSLG), 366 to 386 (LPFT…MPFL), 409 to 429 (LLIT…IIFF), 457 to 477 (LMLG…PTTV), 488 to 508 (FMAL…SSFT), and 583 to 603 (MIKL…LLII).

Belongs to the complex I subunit 5 family.

Its subcellular location is the mitochondrion inner membrane. The enzyme catalyses a ubiquinone + NADH + 5 H(+)(in) = a ubiquinol + NAD(+) + 4 H(+)(out). Functionally, core subunit of the mitochondrial membrane respiratory chain NADH dehydrogenase (Complex I) that is believed to belong to the minimal assembly required for catalysis. Complex I functions in the transfer of electrons from NADH to the respiratory chain. The immediate electron acceptor for the enzyme is believed to be ubiquinone. The chain is NADH-ubiquinone oxidoreductase chain 5 (MT-ND5) from Dugong dugon (Dugong).